A 131-amino-acid chain; its full sequence is (R)-mandelonitrile lyase (131 aa).

In terms of domain architecture, Cupin type-2 spans valine 42–methionine 104. Residues histidine 53, histidine 55, glutamine 59, histidine 94, and histidine 96 each coordinate Mn(2+).

The protein belongs to the cupin domain-containing hydroxynitrile lyase family. Mn(2+) is required as a cofactor.

The enzyme catalyses (R)-mandelonitrile = benzaldehyde + hydrogen cyanide. Functionally, hydroxynitrile lyase which catalyzes mandelonitrile formation from benzaldehyde and hydrogen cyanide with high stereoselectivity in presence of manganese. This Granulicella tundricola (strain ATCC BAA-1859 / DSM 23138 / MP5ACTX9) protein is (R)-mandelonitrile lyase.